A 628-amino-acid polypeptide reads, in one-letter code: Rac GTPase-activating protein 1 (628 aa).

N-acetylmethionine is present on M1. Positions 33–110 (QVVKDFEDFR…IQLIRDILMC (78 aa)) form a coiled coil. An interaction with SLC26A8 region spans residues 107–286 (ILMCDTSGSI…GTPQNTGGMR (180 aa)). S150 is modified (phosphoserine; by PLK1). S155 is modified (phosphoserine). S158 is subject to Phosphoserine; by PLK1. At T162 the chain carries Phosphothreonine. 2 positions are modified to phosphoserine; by PLK1: S165 and S171. A disordered region spans residues 179-201 (KKREKRRSNSRQFIDGPPGPVKK). Phosphoserine occurs at positions 204, 207, and 215. The interval 242 to 284 (SWTRSRGKSGPLQPVNSDSALNSRPLEPRTDTDNLGTPQNTGG) is disordered. K249 participates in a covalent cross-link: Glycyl lysine isopeptide (Lys-Gly) (interchain with G-Cter in SUMO2). S258 is modified (phosphoserine). Residues 274–283 (DNLGTPQNTG) are compositionally biased toward polar residues. Residues 287–336 (LHDFVSKTVIKPESCVPCGKRIKFGKLSLKCRDCRLVSHPECRDRCPLPC) form a Phorbol-ester/DAG-type zinc finger. T343 carries the phosphothreonine modification. Positions 350-540 (GMLADFVSQA…RLLSLPLEYW (191 aa)) constitute a Rho-GAP domain. S388 carries the phosphoserine; by AURKB modification. A Glycyl lysine isopeptide (Lys-Gly) (interchain with G-Cter in SUMO2) cross-link involves residue K405. Phosphoserine; by AURKB is present on S411. 4 positions are modified to phosphothreonine: T564, T577, T585, and T602.

In terms of assembly, heterotetramer of two molecules each of RACGAP1 and KIF23. Found in the centralspindlin complex. Associates with alpha-, beta- and gamma-tubulin and microtubules. Interacts via its Rho-GAP domain with RND2. Associates with AURKB during M phase. Interacts via its Rho-GAP domain and basic region with PRC1. The interaction with PRC1 inhibits its GAP activity towards CDC42 in vitro, which may be required for maintaining normal spindle morphology. Interacts with SLC26A8 via its N-terminus. Interacts with ECT2; the interaction is direct, occurs at anaphase and during cytokinesis in a microtubule-dependent manner, is enhanced by phosphorylation by PLK1 and phosphorylation at Ser-165 plays a major role in mediating binding. Interacts with RAB11FIP3; the interaction occurs at late telophase. Interacts with KIF23; the interaction is direct. Post-translationally, phosphorylated at multiple sites in the midbody during cytokinesis. Phosphorylation by AURKB on Ser-388 at the midbody is, at least in part, responsible for exerting its latent GAP activity towards RhoA. Phosphorylation on multiple serine residues by PLK1 enhances its association with ECT2 and is critical for cleavage furrow formation. Phosphorylation on Ser-165 plays a major role in mediating interaction with ECT2. Phosphorylation on Ser-158 does not appear to contribute to binding to ECT2. In terms of tissue distribution, highly expressed in testis, thymus and spleen and weakly expressed in brain, heart, skeletal muscle and kidney. In testis, expression is restricted to germ cells with the highest levels of expression found in spermatocytes. Not detected in adult liver. Also expressed in fetal liver and in several hematopoietic cell lines.

It localises to the nucleus. It is found in the cytoplasm. Its subcellular location is the cytoskeleton. The protein resides in the spindle. The protein localises to the cytoplasmic vesicle. It localises to the secretory vesicle. It is found in the acrosome. Its subcellular location is the cleavage furrow. The protein resides in the midbody. The protein localises to the midbody ring. It localises to the cell membrane. Component of the centralspindlin complex that serves as a microtubule-dependent and Rho-mediated signaling required for the myosin contractile ring formation during the cell cycle cytokinesis. Required for proper attachment of the midbody to the cell membrane during cytokinesis. Sequentially binds to ECT2 and RAB11FIP3 which regulates cleavage furrow ingression and abscission during cytokinesis. Plays key roles in controlling cell growth and differentiation of hematopoietic cells through mechanisms other than regulating Rac GTPase activity. Has a critical role in erythropoiesis. Also involved in the regulation of growth-related processes in adipocytes and myoblasts. May be involved in regulating spermatogenesis and in the RACGAP1 pathway in neuronal proliferation. Shows strong GAP (GTPase activation) activity towards CDC42 and RAC1 and less towards RHOA. Essential for the early stages of embryogenesis. May play a role in regulating cortical activity through RHOA during cytokinesis. May participate in the regulation of sulfate transport in male germ cells. In Mus musculus (Mouse), this protein is Rac GTPase-activating protein 1.